The sequence spans 320 residues: uncharacterized protein (320 aa).

The Arf-GAP domain maps to 13 to 132; that stretch reads ALVLKSLLRE…VLYPEIPSPE (120 aa). The C4-type zinc finger occupies 28–52; it reads CADCKRNEQPRWASWNLGVFICIRC. Disordered stretches follow at residues 153–212, 227–261, and 284–320; these read NTAS…STRQ, RPQVSSSSITTNATYQNLPSPVSTSTTSSQPYGAF, and NVTSAQPSARASPVQSNSSRPRSSLDSKIINSHDVWK. Low complexity predominate over residues 154–176; that stretch reads TASRSSSAHSVKSTSSATVTNVT. 2 stretches are compositionally biased toward polar residues: residues 183–210 and 228–244; these read SATTSLAQSSPNLASLSKQPSTVHAPST and PQVSSSSITTNATYQNL. Composition is skewed to low complexity over residues 245-257 and 295-310; these read PSPVSTSTTSSQP and SPVQSNSSRPRSSLDS.

It is found in the cytoplasm. The protein localises to the golgi apparatus. In terms of biological role, GTPase-activating protein for the ADP ribosylation factor family. This is an uncharacterized protein from Schizosaccharomyces pombe (strain 972 / ATCC 24843) (Fission yeast).